The following is a 452-amino-acid chain: Bifunctional protein GlmU (452 aa).

Residues 1 to 232 (MTARNSLTIV…EDEVRGINTK (232 aa)) form a pyrophosphorylase region. Residues 11–14 (LAAG), Lys25, Gln78, and 83–84 (GT) each bind UDP-N-acetyl-alpha-D-glucosamine. Asp108 contacts Mg(2+). 4 residues coordinate UDP-N-acetyl-alpha-D-glucosamine: Gly144, Glu158, Asn173, and Asn230. Asn230 contributes to the Mg(2+) binding site. The interval 233-253 (AQLAEAETVMQTRLRLAAMAA) is linker. The N-acetyltransferase stretch occupies residues 254–452 (GVTLIAPETV…KSRHRKPKAH (199 aa)). Arg319 and Lys337 together coordinate UDP-N-acetyl-alpha-D-glucosamine. The active-site Proton acceptor is the His349. Positions 352 and 363 each coordinate UDP-N-acetyl-alpha-D-glucosamine. Acetyl-CoA is bound by residues Ala366, 372 to 373 (NY), Ser391, Ser409, and Arg426.

This sequence in the N-terminal section; belongs to the N-acetylglucosamine-1-phosphate uridyltransferase family. In the C-terminal section; belongs to the transferase hexapeptide repeat family. Homotrimer. It depends on Mg(2+) as a cofactor.

It localises to the cytoplasm. The enzyme catalyses alpha-D-glucosamine 1-phosphate + acetyl-CoA = N-acetyl-alpha-D-glucosamine 1-phosphate + CoA + H(+). It carries out the reaction N-acetyl-alpha-D-glucosamine 1-phosphate + UTP + H(+) = UDP-N-acetyl-alpha-D-glucosamine + diphosphate. It functions in the pathway nucleotide-sugar biosynthesis; UDP-N-acetyl-alpha-D-glucosamine biosynthesis; N-acetyl-alpha-D-glucosamine 1-phosphate from alpha-D-glucosamine 6-phosphate (route II): step 2/2. It participates in nucleotide-sugar biosynthesis; UDP-N-acetyl-alpha-D-glucosamine biosynthesis; UDP-N-acetyl-alpha-D-glucosamine from N-acetyl-alpha-D-glucosamine 1-phosphate: step 1/1. The protein operates within bacterial outer membrane biogenesis; LPS lipid A biosynthesis. In terms of biological role, catalyzes the last two sequential reactions in the de novo biosynthetic pathway for UDP-N-acetylglucosamine (UDP-GlcNAc). The C-terminal domain catalyzes the transfer of acetyl group from acetyl coenzyme A to glucosamine-1-phosphate (GlcN-1-P) to produce N-acetylglucosamine-1-phosphate (GlcNAc-1-P), which is converted into UDP-GlcNAc by the transfer of uridine 5-monophosphate (from uridine 5-triphosphate), a reaction catalyzed by the N-terminal domain. This Rhodopseudomonas palustris (strain TIE-1) protein is Bifunctional protein GlmU.